We begin with the raw amino-acid sequence, 86 residues long: MDPYKVIIRPVITDKAISLIEKENKLTFIVDRRATKQDIKRAIEEIFNVKVEKVNTLITPKGEKKAYVKLKPEYSASEIAARLGLF.

The protein belongs to the universal ribosomal protein uL23 family. Part of the 50S ribosomal subunit. Contacts protein L29.

In terms of biological role, binds to 23S rRNA. One of the proteins that surrounds the polypeptide exit tunnel on the outside of the ribosome. In Pyrococcus abyssi (strain GE5 / Orsay), this protein is Large ribosomal subunit protein uL23.